The following is a 637-amino-acid chain: Chaperone protein HtpG (637 aa).

Residues 1-345 (MSQQETHGFQ…SNDLPLNVSR (345 aa)) form an a; substrate-binding region. The segment at 346–562 (EILQDNQVTT…EGEMSTQMIK (217 aa)) is b. The c stretch occupies residues 563-637 (LMQAAGQAVP…MNQMLLANAK (75 aa)).

Belongs to the heat shock protein 90 family. In terms of assembly, homodimer.

The protein localises to the cytoplasm. Molecular chaperone. Has ATPase activity. In Shewanella denitrificans (strain OS217 / ATCC BAA-1090 / DSM 15013), this protein is Chaperone protein HtpG.